The primary structure comprises 99 residues: Malonate decarboxylase acyl carrier protein (99 aa).

Residue Ser-25 is modified to O-(phosphoribosyl dephospho-coenzyme A)serine.

This sequence belongs to the MdcC family. Post-translationally, covalently binds the prosthetic group of malonate decarboxylase.

It localises to the cytoplasm. In terms of biological role, subunit of malonate decarboxylase, it is an acyl carrier protein to which acetyl and malonyl thioester residues are bound via a 2'-(5''-phosphoribosyl)-3'-dephospho-CoA prosthetic group and turn over during the catalytic mechanism. In Pseudomonas syringae pv. syringae (strain B728a), this protein is Malonate decarboxylase acyl carrier protein.